The primary structure comprises 132 residues: Phosphomevalonate dehydratase small subunit (132 aa).

Catalysis depends on Ser58, which acts as the Proton acceptor.

The protein belongs to the AcnX type II small subunit family. In terms of assembly, heterodimer composed of a large subunit (PMDh-L) and a small subunit (PMDh-S).

The catalysed reaction is (R)-5-phosphomevalonate = (2E)-3-methyl-5-phosphooxypent-2-enoate + H2O. The protein operates within isoprenoid biosynthesis; isopentenyl diphosphate biosynthesis via mevalonate pathway. With respect to regulation, neither the addition of 1 mM Mg(2+) nor 1 mM Mn(2+) has a significant effect on the activity, whereas Zn(2+) causes almost complete inactivation. Strongly inhibited by H(2)O(2), but not by EDTA or iodoacetamide. Its function is as follows. Component of a hydro-lyase that catalyzes the dehydration of mevalonate 5-phosphate (MVA5P) to form trans-anhydromevalonate 5-phosphate (tAHMP). Involved in the archaeal mevalonate (MVA) pathway, which provides fundamental precursors for isoprenoid biosynthesis, such as isopentenyl diphosphate (IPP) and dimethylallyl diphosphate (DMAPP). In Aeropyrum pernix (strain ATCC 700893 / DSM 11879 / JCM 9820 / NBRC 100138 / K1), this protein is Phosphomevalonate dehydratase small subunit.